Consider the following 2282-residue polypeptide: Protein Ycf2 (2282 aa).

1637–1644 provides a ligand contact to ATP; the sequence is GSIGTGRS.

Belongs to the Ycf2 family.

Its subcellular location is the plastid. It localises to the chloroplast stroma. Probable ATPase of unknown function. Its presence in a non-photosynthetic plant (Epifagus virginiana) and experiments in tobacco indicate that it has an essential function which is probably not related to photosynthesis. In Citrus sinensis (Sweet orange), this protein is Protein Ycf2.